The following is a 443-amino-acid chain: Probable glycine dehydrogenase (decarboxylating) subunit 1 (443 aa).

This sequence belongs to the GcvP family. N-terminal subunit subfamily. As to quaternary structure, the glycine cleavage system is composed of four proteins: P, T, L and H. In this organism, the P 'protein' is a heterodimer of two subunits.

It catalyses the reaction N(6)-[(R)-lipoyl]-L-lysyl-[glycine-cleavage complex H protein] + glycine + H(+) = N(6)-[(R)-S(8)-aminomethyldihydrolipoyl]-L-lysyl-[glycine-cleavage complex H protein] + CO2. In terms of biological role, the glycine cleavage system catalyzes the degradation of glycine. The P protein binds the alpha-amino group of glycine through its pyridoxal phosphate cofactor; CO(2) is released and the remaining methylamine moiety is then transferred to the lipoamide cofactor of the H protein. The polypeptide is Probable glycine dehydrogenase (decarboxylating) subunit 1 (Endomicrobium trichonymphae).